Here is a 447-residue protein sequence, read N- to C-terminus: Methyl-coenzyme M reductase I subunit beta (447 aa).

Tyr-371 is a coenzyme M binding site. Position 373 (Gly-373) interacts with coenzyme B.

The protein belongs to the methyl-coenzyme M reductase beta subunit family. As to quaternary structure, MCR is a hexamer of two alpha, two beta, and two gamma chains, forming a dimer of heterotrimers. Requires coenzyme F430 as cofactor.

Its subcellular location is the cytoplasm. The catalysed reaction is coenzyme B + methyl-coenzyme M = methane + coenzyme M-coenzyme B heterodisulfide. The protein operates within one-carbon metabolism; methyl-coenzyme M reduction; methane from methyl-coenzyme M: step 1/1. Component of the methyl-coenzyme M reductase (MCR) I that catalyzes the reductive cleavage of methyl-coenzyme M (CoM-S-CH3 or 2-(methylthio)ethanesulfonate) using coenzyme B (CoB or 7-mercaptoheptanoylthreonine phosphate) as reductant which results in the production of methane and the mixed heterodisulfide of CoB and CoM (CoM-S-S-CoB). This is the final step in methanogenesis. This is Methyl-coenzyme M reductase I subunit beta (mcrB) from Methanocaldococcus jannaschii (strain ATCC 43067 / DSM 2661 / JAL-1 / JCM 10045 / NBRC 100440) (Methanococcus jannaschii).